The primary structure comprises 192 residues: Imidazole glycerol phosphate synthase subunit HisH (192 aa).

Residues 1-192 (MIVIVDYGLG…QAIQGGFIND (192 aa)) form the Glutamine amidotransferase type-1 domain. Cys-77 acts as the Nucleophile in catalysis. Catalysis depends on residues His-169 and Glu-171.

In terms of assembly, heterodimer of HisH and HisF.

It is found in the cytoplasm. It catalyses the reaction 5-[(5-phospho-1-deoxy-D-ribulos-1-ylimino)methylamino]-1-(5-phospho-beta-D-ribosyl)imidazole-4-carboxamide + L-glutamine = D-erythro-1-(imidazol-4-yl)glycerol 3-phosphate + 5-amino-1-(5-phospho-beta-D-ribosyl)imidazole-4-carboxamide + L-glutamate + H(+). The enzyme catalyses L-glutamine + H2O = L-glutamate + NH4(+). It functions in the pathway amino-acid biosynthesis; L-histidine biosynthesis; L-histidine from 5-phospho-alpha-D-ribose 1-diphosphate: step 5/9. Functionally, IGPS catalyzes the conversion of PRFAR and glutamine to IGP, AICAR and glutamate. The HisH subunit catalyzes the hydrolysis of glutamine to glutamate and ammonia as part of the synthesis of IGP and AICAR. The resulting ammonia molecule is channeled to the active site of HisF. This chain is Imidazole glycerol phosphate synthase subunit HisH, found in Staphylococcus aureus (strain COL).